A 219-amino-acid polypeptide reads, in one-letter code: Cytidylate kinase (219 aa).

11–19 (GPAGVGKTT) provides a ligand contact to ATP.

This sequence belongs to the cytidylate kinase family. Type 1 subfamily.

It is found in the cytoplasm. The enzyme catalyses CMP + ATP = CDP + ADP. It carries out the reaction dCMP + ATP = dCDP + ADP. The polypeptide is Cytidylate kinase (Oleidesulfovibrio alaskensis (strain ATCC BAA-1058 / DSM 17464 / G20) (Desulfovibrio alaskensis)).